The primary structure comprises 213 residues: ATP phosphoribosyltransferase (213 aa).

The protein belongs to the ATP phosphoribosyltransferase family. Short subfamily. In terms of assembly, heteromultimer composed of HisG and HisZ subunits.

The protein localises to the cytoplasm. It catalyses the reaction 1-(5-phospho-beta-D-ribosyl)-ATP + diphosphate = 5-phospho-alpha-D-ribose 1-diphosphate + ATP. It participates in amino-acid biosynthesis; L-histidine biosynthesis; L-histidine from 5-phospho-alpha-D-ribose 1-diphosphate: step 1/9. Catalyzes the condensation of ATP and 5-phosphoribose 1-diphosphate to form N'-(5'-phosphoribosyl)-ATP (PR-ATP). Has a crucial role in the pathway because the rate of histidine biosynthesis seems to be controlled primarily by regulation of HisG enzymatic activity. The polypeptide is ATP phosphoribosyltransferase (hisG) (Listeria monocytogenes serovar 1/2a (strain ATCC BAA-679 / EGD-e)).